A 936-amino-acid chain; its full sequence is Periplasmic nitrate reductase (936 aa).

Residues 1–31 (MALSRRDFLKSSAAAAAASAVGLSVPKEVEA) constitute a signal peptide (tat-type signal). A 4Fe-4S Mo/W bis-MGD-type domain is found at 40 to 96 (WRWDKAVCRFCGTGCGIMIATKDDRIVAVKGDPLAPVNRGLNCIKGYFTAKIMYGAD). The [4Fe-4S] cluster site is built by Cys47, Cys50, Cys54, and Cys82. Residues Lys84, Gln152, Asn177, Cys181, 214–221 (WGSNMAEM), 246–250 (STYTH), Met424, Gln428, Asn534, 559–560 (SD), Lys582, Asp609, and 826–835 (TGRVLEHWHS) contribute to the Mo-bis(molybdopterin guanine dinucleotide) site. A substrate-binding site is contributed by Trp902. Mo-bis(molybdopterin guanine dinucleotide) contacts are provided by Asn910 and Lys927.

It belongs to the prokaryotic molybdopterin-containing oxidoreductase family. NasA/NapA/NarB subfamily. Component of the periplasmic nitrate reductase NapAB complex composed of NapA and NapB. Requires [4Fe-4S] cluster as cofactor. The cofactor is Mo-bis(molybdopterin guanine dinucleotide). In terms of processing, predicted to be exported by the Tat system. The position of the signal peptide cleavage has not been experimentally proven.

It localises to the periplasm. The enzyme catalyses 2 Fe(II)-[cytochrome] + nitrate + 2 H(+) = 2 Fe(III)-[cytochrome] + nitrite + H2O. Functionally, catalytic subunit of the periplasmic nitrate reductase complex NapAB. Receives electrons from NapB and catalyzes the reduction of nitrate to nitrite. This is Periplasmic nitrate reductase from Nitratiruptor sp. (strain SB155-2).